The sequence spans 380 residues: 3-dehydroquinate synthase (380 aa).

NAD(+) is bound by residues Gly100 to Asp104, Thr124 to Thr125, Lys137, and Lys146. Zn(2+) is bound by residues Glu179, His251, and His267. A disordered region spans residues Tyr320–Pro343.

It belongs to the sugar phosphate cyclases superfamily. Dehydroquinate synthase family. NAD(+) serves as cofactor. The cofactor is Co(2+). It depends on Zn(2+) as a cofactor.

The protein localises to the cytoplasm. It catalyses the reaction 7-phospho-2-dehydro-3-deoxy-D-arabino-heptonate = 3-dehydroquinate + phosphate. It participates in metabolic intermediate biosynthesis; chorismate biosynthesis; chorismate from D-erythrose 4-phosphate and phosphoenolpyruvate: step 2/7. Catalyzes the conversion of 3-deoxy-D-arabino-heptulosonate 7-phosphate (DAHP) to dehydroquinate (DHQ). The protein is 3-dehydroquinate synthase of Tropheryma whipplei (strain Twist) (Whipple's bacillus).